A 71-amino-acid chain; its full sequence is Small ribosomal subunit protein bS21 (71 aa).

Belongs to the bacterial ribosomal protein bS21 family.

The chain is Small ribosomal subunit protein bS21 from Nitrosococcus oceani (strain ATCC 19707 / BCRC 17464 / JCM 30415 / NCIMB 11848 / C-107).